The following is a 192-amino-acid chain: MAWPCISRLCCLARRWNQLDRSDVAVPLTLHSYSDLESEEPIPGGVPSRRGPSPAGSRDPGRDVPLTQYQRDFGVWTAPSGSRDATQGRGPGASSRRTKPSATPGRGVYVLPIGDADAAAVATTSYRQEFQAWTGVKPSRSTKVKPAKVITTHSSGWDGSPRAGFQAPEVRKKFAPNPSAIFQASAPRILNV.

Residues Cys-5, Cys-10, and Cys-11 are each lipidated (S-palmitoyl cysteine). Residues 36–106 (LESEEPIPGG…RTKPSATPGR (71 aa)) are disordered. Phosphoserine is present on Ser-38. Low complexity predominate over residues 43-58 (PGGVPSRRGPSPAGSR). Mn stretches follow at residues 123–136 (TTSY…WTGV) and 158–170 (DGSP…APEV). At Ser-160 the chain carries Phosphoserine.

This sequence belongs to the STOP family. As to quaternary structure, interacts with calmodulin. Post-translationally, palmitoylated. Palmitoylation enhances association with microtubules.

Its subcellular location is the golgi apparatus. The protein resides in the cytoplasm. It is found in the cytoskeleton. May have microtubule-stabilizing activity. This Bos taurus (Bovine) protein is MAP6 domain-containing protein 1 (MAP6D1).